Here is a 358-residue protein sequence, read N- to C-terminus: 3-isopropylmalate dehydrogenase (358 aa).

76 to 89 (GPRWDNLTGAERPE) serves as a coordination point for NAD(+). Substrate-binding residues include R96, R106, R135, and D225. Positions 225, 249, and 253 each coordinate Mg(2+). 283–295 (GSAPDIAGQNKAN) lines the NAD(+) pocket.

Belongs to the isocitrate and isopropylmalate dehydrogenases family. LeuB type 1 subfamily. As to quaternary structure, homodimer. The cofactor is Mg(2+). It depends on Mn(2+) as a cofactor.

It is found in the cytoplasm. It carries out the reaction (2R,3S)-3-isopropylmalate + NAD(+) = 4-methyl-2-oxopentanoate + CO2 + NADH. It participates in amino-acid biosynthesis; L-leucine biosynthesis; L-leucine from 3-methyl-2-oxobutanoate: step 3/4. Its function is as follows. Catalyzes the oxidation of 3-carboxy-2-hydroxy-4-methylpentanoate (3-isopropylmalate) to 3-carboxy-4-methyl-2-oxopentanoate. The product decarboxylates to 4-methyl-2 oxopentanoate. The sequence is that of 3-isopropylmalate dehydrogenase from Oleidesulfovibrio alaskensis (strain ATCC BAA-1058 / DSM 17464 / G20) (Desulfovibrio alaskensis).